The sequence spans 92 residues: Probable Fe(2+)-trafficking protein (92 aa).

Belongs to the Fe(2+)-trafficking protein family.

Could be a mediator in iron transactions between iron acquisition and iron-requiring processes, such as synthesis and/or repair of Fe-S clusters in biosynthetic enzymes. The protein is Probable Fe(2+)-trafficking protein of Shewanella piezotolerans (strain WP3 / JCM 13877).